Consider the following 545-residue polypeptide: CTP synthase (545 aa).

The segment at threonine 2–leucine 266 is amidoligase domain. Serine 14 contacts CTP. Serine 14 is a binding site for UTP. Residues serine 15–isoleucine 20 and aspartate 72 contribute to the ATP site. Residues aspartate 72 and glutamate 140 each coordinate Mg(2+). Residues aspartate 147–glutamate 149, lysine 187–glutamine 192, and lysine 223 each bind CTP. UTP is bound by residues lysine 187–glutamine 192 and lysine 223. Lysine 239–valine 241 lines the ATP pocket. A Glutamine amidotransferase type-1 domain is found at threonine 291 to arginine 542. Residue glycine 352 participates in L-glutamine binding. The active-site Nucleophile; for glutamine hydrolysis is cysteine 379. L-glutamine-binding positions include leucine 380–glutamine 383, glutamate 403, and arginine 470. Catalysis depends on residues histidine 515 and glutamate 517.

The protein belongs to the CTP synthase family. Homotetramer.

The enzyme catalyses UTP + L-glutamine + ATP + H2O = CTP + L-glutamate + ADP + phosphate + 2 H(+). It carries out the reaction L-glutamine + H2O = L-glutamate + NH4(+). It catalyses the reaction UTP + NH4(+) + ATP = CTP + ADP + phosphate + 2 H(+). It participates in pyrimidine metabolism; CTP biosynthesis via de novo pathway; CTP from UDP: step 2/2. Allosterically activated by GTP, when glutamine is the substrate; GTP has no effect on the reaction when ammonia is the substrate. The allosteric effector GTP functions by stabilizing the protein conformation that binds the tetrahedral intermediate(s) formed during glutamine hydrolysis. Inhibited by the product CTP, via allosteric rather than competitive inhibition. Functionally, catalyzes the ATP-dependent amination of UTP to CTP with either L-glutamine or ammonia as the source of nitrogen. Regulates intracellular CTP levels through interactions with the four ribonucleotide triphosphates. The sequence is that of CTP synthase from Salmonella typhi.